The primary structure comprises 225 residues: THAP domain-containing protein 1 B (225 aa).

A THAP-type zinc finger spans residues 5–57; it reads CSAYGCKNRYDKDRPISFHKFPLKRPLLCKKWEAAVRRADFKPTKYSSICSDH. Residues 139–194 are a coiled coil; that stretch reads VEDTVHQRRRIQQLEEQVDKLRKKLKIANQKCRRQERSLEKLEKEVSEYREAKGSG.

It belongs to the THAP1 family.

It is found in the nucleus. Its subcellular location is the nucleoplasm. Its function is as follows. DNA-binding transcription regulator that regulates endothelial cell proliferation and G1/S cell-cycle progression. Specifically binds the 5'-[AT]NTNN[GT]GGCA[AGT]-3' core DNA sequence and acts by modulating expression of pRB-E2F cell-cycle target genes. The protein is THAP domain-containing protein 1 B (thap1-b) of Xenopus laevis (African clawed frog).